Here is an 86-residue protein sequence, read N- to C-terminus: MKTLLLTLVVVTIVCLDLGYTLTCLNCPEMFCGKFQTCRNGEKICFKMLQQRRPFSLRYIRGCAATCPGTKPRDMVECCNTDRCNR.

An N-terminal signal peptide occupies residues Met1–Thr21. Intrachain disulfides connect Cys24–Cys45, Cys27–Cys32, Cys38–Cys63, Cys67–Cys78, and Cys79–Cys84.

This sequence belongs to the three-finger toxin family. Ancestral subfamily. Orphan group II sub-subfamily. As to expression, expressed by the venom gland.

Its subcellular location is the secreted. In terms of biological role, binds with low affinity to muscular (alpha-1-beta-1-delta-epsilon/CHRNA1-CHRNB1-CHRND-CHRNE) and very low affinity to neuronal (alpha-7/CHRNA7) nicotinic acetylcholine receptor (nAChR). The sequence is that of Weak neurotoxin 9 from Naja sputatrix (Malayan spitting cobra).